The chain runs to 126 residues: Prefoldin subunit beta (126 aa).

It belongs to the prefoldin subunit beta family. In terms of assembly, heterohexamer of two alpha and four beta subunits.

The protein localises to the cytoplasm. Its function is as follows. Molecular chaperone capable of stabilizing a range of proteins. Seems to fulfill an ATP-independent, HSP70-like function in archaeal de novo protein folding. In Saccharolobus islandicus (strain Y.N.15.51 / Yellowstone #2) (Sulfolobus islandicus), this protein is Prefoldin subunit beta.